We begin with the raw amino-acid sequence, 111 residues long: Universal stress protein B (111 aa).

The next 2 helical transmembrane spans lie at 1–21 and 90–110; these read MIST…NMAR and FILT…LLIW.

The protein belongs to the universal stress protein B family.

The protein resides in the cell inner membrane. The chain is Universal stress protein B from Enterobacter sp. (strain 638).